Reading from the N-terminus, the 268-residue chain is Putative carbamate hydrolase RutD (268 aa).

One can recognise an AB hydrolase-1 domain in the interval 15–119 (PVMVMIAGLG…VIVNGWLSLS (105 aa)).

This sequence belongs to the AB hydrolase superfamily. Hydrolase RutD family.

It catalyses the reaction carbamate + 2 H(+) = NH4(+) + CO2. Functionally, involved in pyrimidine catabolism. May facilitate the hydrolysis of carbamate, a reaction that can also occur spontaneously. The protein is Putative carbamate hydrolase RutD of Cronobacter sakazakii (strain ATCC BAA-894) (Enterobacter sakazakii).